The sequence spans 220 residues: N-(5'-phosphoribosyl)anthranilate isomerase (220 aa).

It belongs to the TrpF family.

It carries out the reaction N-(5-phospho-beta-D-ribosyl)anthranilate = 1-(2-carboxyphenylamino)-1-deoxy-D-ribulose 5-phosphate. It participates in amino-acid biosynthesis; L-tryptophan biosynthesis; L-tryptophan from chorismate: step 3/5. This Xylella fastidiosa (strain 9a5c) protein is N-(5'-phosphoribosyl)anthranilate isomerase.